A 137-amino-acid chain; its full sequence is Large ribosomal subunit protein uL13 (137 aa).

The protein belongs to the universal ribosomal protein uL13 family. In terms of assembly, part of the 50S ribosomal subunit.

Its function is as follows. This protein is one of the early assembly proteins of the 50S ribosomal subunit, although it is not seen to bind rRNA by itself. It is important during the early stages of 50S assembly. The chain is Large ribosomal subunit protein uL13 from Methanococcus maripaludis (strain DSM 14266 / JCM 13030 / NBRC 101832 / S2 / LL).